The following is a 295-amino-acid chain: Nucleotide-binding protein CMS1991 (295 aa).

An ATP-binding site is contributed by 19–26 (GMSGAGRS). A GTP-binding site is contributed by 70–73 (DVRG).

This sequence belongs to the RapZ-like family.

In terms of biological role, displays ATPase and GTPase activities. The protein is Nucleotide-binding protein CMS1991 of Clavibacter sepedonicus (Clavibacter michiganensis subsp. sepedonicus).